Consider the following 88-residue polypeptide: MGFTEETVRFRLDDTDKQEISKTLTSVYRSLEEKGYNPINQIIGYVLSGDPAYIPRYNDARNQIRKHERDEIIEELVRYYLKGNGIDL.

This sequence belongs to the UPF0297 family.

The protein is UPF0297 protein SSU98_0066 of Streptococcus suis (strain 98HAH33).